The chain runs to 117 residues: Ribonuclease P protein component (117 aa).

Belongs to the RnpA family. In terms of assembly, consists of a catalytic RNA component (M1 or rnpB) and a protein subunit.

It carries out the reaction Endonucleolytic cleavage of RNA, removing 5'-extranucleotides from tRNA precursor.. Functionally, RNaseP catalyzes the removal of the 5'-leader sequence from pre-tRNA to produce the mature 5'-terminus. It can also cleave other RNA substrates such as 4.5S RNA. The protein component plays an auxiliary but essential role in vivo by binding to the 5'-leader sequence and broadening the substrate specificity of the ribozyme. This is Ribonuclease P protein component from Thermotoga petrophila (strain ATCC BAA-488 / DSM 13995 / JCM 10881 / RKU-1).